The sequence spans 440 residues: UDP-N-acetylglucosamine 1-carboxyvinyltransferase 1 (440 aa).

22–23 is a phosphoenolpyruvate binding site; that stretch reads KN. Arg93 is a binding site for UDP-N-acetyl-alpha-D-glucosamine. Residue Cys117 is the Proton donor of the active site. 2-(S-cysteinyl)pyruvic acid O-phosphothioketal is present on Cys117. Residues 122 to 126, Asp306, and Val328 each bind UDP-N-acetyl-alpha-D-glucosamine; that span reads RPIDQ.

The protein belongs to the EPSP synthase family. MurA subfamily.

The protein resides in the cytoplasm. It carries out the reaction phosphoenolpyruvate + UDP-N-acetyl-alpha-D-glucosamine = UDP-N-acetyl-3-O-(1-carboxyvinyl)-alpha-D-glucosamine + phosphate. The protein operates within cell wall biogenesis; peptidoglycan biosynthesis. Functionally, cell wall formation. Adds enolpyruvyl to UDP-N-acetylglucosamine. This is UDP-N-acetylglucosamine 1-carboxyvinyltransferase 1 from Halalkalibacterium halodurans (strain ATCC BAA-125 / DSM 18197 / FERM 7344 / JCM 9153 / C-125) (Bacillus halodurans).